Here is a 493-residue protein sequence, read N- to C-terminus: Cobyric acid synthase (493 aa).

The 195-residue stretch at 246–440 (PIDIAVIKMP…IHGVFDGVVF (195 aa)) folds into the GATase cobBQ-type domain. Cysteine 326 serves as the catalytic Nucleophile. Histidine 432 is a catalytic residue.

Belongs to the CobB/CobQ family. CobQ subfamily.

It participates in cofactor biosynthesis; adenosylcobalamin biosynthesis. In terms of biological role, catalyzes amidations at positions B, D, E, and G on adenosylcobyrinic A,C-diamide. NH(2) groups are provided by glutamine, and one molecule of ATP is hydrogenolyzed for each amidation. This chain is Cobyric acid synthase, found in Clostridium botulinum (strain Okra / Type B1).